Reading from the N-terminus, the 775-residue chain is Glycerol-3-phosphate acyltransferase (775 aa).

Positions 268-273 (HRSYID) match the HXXXXD motif motif.

The protein belongs to the GPAT/DAPAT family.

It is found in the cell membrane. It catalyses the reaction sn-glycerol 3-phosphate + an acyl-CoA = a 1-acyl-sn-glycero-3-phosphate + CoA. The protein operates within phospholipid metabolism; CDP-diacylglycerol biosynthesis; CDP-diacylglycerol from sn-glycerol 3-phosphate: step 1/3. The protein is Glycerol-3-phosphate acyltransferase (plsB) of Mycobacterium leprae (strain TN).